The following is an 88-amino-acid chain: MQVLVRDNNVDQALRALKKKMQREGIFREMKMRGHYEKPSEKRAREKAEAVRRARKLARKRAQREGLLPMTPRPVAAGGAAGAARPPR.

Residues 58–88 (ARKRAQREGLLPMTPRPVAAGGAAGAARPPR) form a disordered region. A compositionally biased stretch (low complexity) spans 73-88 (RPVAAGGAAGAARPPR).

The protein belongs to the bacterial ribosomal protein bS21 family.

This chain is Small ribosomal subunit protein bS21, found in Mesorhizobium japonicum (strain LMG 29417 / CECT 9101 / MAFF 303099) (Mesorhizobium loti (strain MAFF 303099)).